Reading from the N-terminus, the 333-residue chain is MIITDTPIDTLAGSILDGASISSEQALALTALSGASLQSLFAAASRVREHHFGNQVSLCGIINAKSGLCPEDCAFCAQSSHHATGVACYPLLDQDTLLAGARSVAGHGAACYGIVTSGSGISEGDELEQVCAAIRAIRAEGRIAPGASLGTLTKTAAEQLKAAGLVTYHHNLETSRSFFPQICSTHDYDDDVATVQLAKQVGLRVCCGGLFGLGETMAQRVELALTLRELQVDSVPINFLDPVPGTPLAVMQQLTSLDCLHTIALYRLILPDVHITICGGRQRNLRELQSWVFLAGASGIMTGNYLTKEGRQPADDLRMIEDLGLVIAKEMLR.

A Radical SAM core domain is found at His51–Arg281. [4Fe-4S] cluster contacts are provided by Cys69, Cys73, and Cys76. Cys206 serves as a coordination point for [2Fe-2S] cluster.

It belongs to the radical SAM superfamily. Biotin synthase family. In terms of assembly, homodimer. Requires [4Fe-4S] cluster as cofactor. It depends on [2Fe-2S] cluster as a cofactor.

It carries out the reaction (4R,5S)-dethiobiotin + (sulfur carrier)-SH + 2 reduced [2Fe-2S]-[ferredoxin] + 2 S-adenosyl-L-methionine = (sulfur carrier)-H + biotin + 2 5'-deoxyadenosine + 2 L-methionine + 2 oxidized [2Fe-2S]-[ferredoxin]. It participates in cofactor biosynthesis; biotin biosynthesis; biotin from 7,8-diaminononanoate: step 2/2. Catalyzes the conversion of dethiobiotin (DTB) to biotin by the insertion of a sulfur atom into dethiobiotin via a radical-based mechanism. This is Biotin synthase from Trichlorobacter lovleyi (strain ATCC BAA-1151 / DSM 17278 / SZ) (Geobacter lovleyi).